The primary structure comprises 156 residues: Arginine repressor (156 aa).

The protein belongs to the ArgR family.

Its subcellular location is the cytoplasm. It functions in the pathway amino-acid biosynthesis; L-arginine biosynthesis [regulation]. In terms of biological role, regulates arginine biosynthesis genes. The protein is Arginine repressor of Vibrio campbellii (strain ATCC BAA-1116).